The following is an 840-amino-acid chain: Subtilisin-like protease SBT2.3 (840 aa).

The signal sequence occupies residues 1-27; that stretch reads MVRVMLVRFGFLLLMISFVFLSNNTLG. A propeptide spans 28 to 146 (activation peptide); it reads QQQDDDDDSA…IVLDYSVRTA (119 aa). The region spanning 38–146 is the Inhibitor I9 domain; it reads VYIVTLKQPP…IVLDYSVRTA (109 aa). The segment covering 61–81 has biased composition (basic residues); that stretch reads KSKFTPKLRPRNNSRKRHGKS. Residues 61–85 are disordered; that stretch reads KSKFTPKLRPRNNSRKRHGKSKIPS. Asn-72 carries N-linked (GlcNAc...) asparagine glycosylation. Positions 148–694 constitute a Peptidase S8 domain; that stretch reads TYTPQFMGLP…SGFVNATAAL (547 aa). Asp-180 serves as the catalytic Charge relay system. N-linked (GlcNAc...) asparagine glycans are attached at residues Asn-193 and Asn-241. The active-site Charge relay system is His-255. N-linked (GlcNAc...) asparagine glycans are attached at residues Asn-398, Asn-427, Asn-480, Asn-525, and Asn-553. The PA domain maps to 418–513; that stretch reads MISAFHALNN…MDMPGIIIPS (96 aa). The active-site Charge relay system is the Ser-619. N-linked (GlcNAc...) asparagine glycans are attached at residues Asn-689, Asn-715, Asn-723, Asn-767, and Asn-808.

It belongs to the peptidase S8 family.

It localises to the secreted. This is Subtilisin-like protease SBT2.3 from Arabidopsis thaliana (Mouse-ear cress).